A 405-amino-acid chain; its full sequence is Phosphopentomutase (405 aa).

Mn(2+) is bound by residues Asp10, Asp305, His310, Asp346, His347, and His358.

This sequence belongs to the phosphopentomutase family. The cofactor is Mn(2+).

It localises to the cytoplasm. It carries out the reaction 2-deoxy-alpha-D-ribose 1-phosphate = 2-deoxy-D-ribose 5-phosphate. The enzyme catalyses alpha-D-ribose 1-phosphate = D-ribose 5-phosphate. Its pathway is carbohydrate degradation; 2-deoxy-D-ribose 1-phosphate degradation; D-glyceraldehyde 3-phosphate and acetaldehyde from 2-deoxy-alpha-D-ribose 1-phosphate: step 1/2. Isomerase that catalyzes the conversion of deoxy-ribose 1-phosphate (dRib-1-P) and ribose 1-phosphate (Rib-1-P) to deoxy-ribose 5-phosphate (dRib-5-P) and ribose 5-phosphate (Rib-5-P), respectively. The polypeptide is Phosphopentomutase (Methylobacterium sp. (strain 4-46)).